The following is a 338-amino-acid chain: Phenylalanine--tRNA ligase alpha subunit (338 aa).

Glutamate 252 is a binding site for Mg(2+).

This sequence belongs to the class-II aminoacyl-tRNA synthetase family. Phe-tRNA synthetase alpha subunit type 1 subfamily. In terms of assembly, tetramer of two alpha and two beta subunits. Requires Mg(2+) as cofactor.

It localises to the cytoplasm. The enzyme catalyses tRNA(Phe) + L-phenylalanine + ATP = L-phenylalanyl-tRNA(Phe) + AMP + diphosphate + H(+). The protein is Phenylalanine--tRNA ligase alpha subunit of Pseudomonas fluorescens (strain SBW25).